The primary structure comprises 274 residues: Putative homeobox protein Meis3-like 1 (274 aa).

Residues 12 to 65 (GGDVCSSDSFNEDNTAFAKQVRSERPFFSSNPELDNLMIQAIQVLRFHLLELEK) form the MEIS N-terminal domain. Disordered stretches follow at residues 108–167 (DSGS…KRGI) and 228–248 (NRTG…GYTE). Polar residues predominate over residues 123-135 (GLASQSGDNSSDQ). Positions 161-223 (RNKKRGIFPK…NARRRIVQPM (63 aa)) form a DNA-binding region, homeobox.

The protein belongs to the TALE/MEIS homeobox family.

The protein localises to the nucleus. This chain is Putative homeobox protein Meis3-like 1 (MEIS3P1), found in Homo sapiens (Human).